Consider the following 118-residue polypeptide: MGIKYSSKINKIRTFALSLIFVGFIVMYIGIFFRTSPFVMTLFMILGLLFIIASTVVYFWIGTLSTRAVKVVCPSCGKITKMLGKVDLCMFCNEPLTLDPELEGKEFDEKYNRKKRKS.

The next 2 membrane-spanning stretches (helical) occupy residues 12 to 32 and 42 to 62; these read IRTFALSLIFVGFIVMYIGIF and LFMILGLLFIIASTVVYFWIG.

This sequence belongs to the UPF0295 family.

The protein resides in the cell membrane. This is UPF0295 protein GWCH70_0499 from Geobacillus sp. (strain WCH70).